The primary structure comprises 713 residues: Probable 1-deoxy-D-xylulose-5-phosphate synthase 2, chloroplastic (713 aa).

The transit peptide at 1 to 30 directs the protein to the chloroplast; that stretch reads MALQASSSPSMFRAIPTNTNASCRRKLQVR. Thiamine diphosphate is bound by residues H140 and 181-183; that span reads GHS. D212 is a binding site for Mg(2+). Residues 213 to 214, N241, Y362, and E444 each bind thiamine diphosphate; that span reads GA. A Mg(2+)-binding site is contributed by N241.

It belongs to the transketolase family. DXPS subfamily. Homodimer. Mg(2+) serves as cofactor. Requires thiamine diphosphate as cofactor.

It is found in the plastid. Its subcellular location is the chloroplast. The enzyme catalyses D-glyceraldehyde 3-phosphate + pyruvate + H(+) = 1-deoxy-D-xylulose 5-phosphate + CO2. The protein operates within metabolic intermediate biosynthesis; 1-deoxy-D-xylulose 5-phosphate biosynthesis; 1-deoxy-D-xylulose 5-phosphate from D-glyceraldehyde 3-phosphate and pyruvate: step 1/1. Its function is as follows. Catalyzes the acyloin condensation reaction between C atoms 2 and 3 of pyruvate and glyceraldehyde 3-phosphate to yield 1-deoxy-D-xylulose-5-phosphate (DXP). Is a limiting enzyme for plastidic isoprenoid biosynthesis and essential for chloroplast development. This chain is Probable 1-deoxy-D-xylulose-5-phosphate synthase 2, chloroplastic, found in Oryza sativa subsp. japonica (Rice).